The sequence spans 441 residues: 23S rRNA (uracil(1939)-C(5))-methyltransferase RlmD (441 aa).

Positions 10-68 constitute a TRAM domain; that stretch reads KPLKQQSLVLDITAMDHHGRGIAKHNNKVCFVSNALPNEQVKATIIADKARYSEAQTHK. [4Fe-4S] cluster-binding residues include C81, C87, C90, and C169. The S-adenosyl-L-methionine site is built by Q274, F303, N308, E324, D351, and D372. The Nucleophile role is filled by C398.

This sequence belongs to the class I-like SAM-binding methyltransferase superfamily. RNA M5U methyltransferase family. RlmD subfamily.

It carries out the reaction uridine(1939) in 23S rRNA + S-adenosyl-L-methionine = 5-methyluridine(1939) in 23S rRNA + S-adenosyl-L-homocysteine + H(+). Functionally, catalyzes the formation of 5-methyl-uridine at position 1939 (m5U1939) in 23S rRNA. This Pseudoalteromonas translucida (strain TAC 125) protein is 23S rRNA (uracil(1939)-C(5))-methyltransferase RlmD.